Consider the following 549-residue polypeptide: Glucose-6-phosphate isomerase (549 aa).

Glu355 serves as the catalytic Proton donor. Active-site residues include His386 and Lys514.

It belongs to the GPI family.

It is found in the cytoplasm. It carries out the reaction alpha-D-glucose 6-phosphate = beta-D-fructose 6-phosphate. It participates in carbohydrate biosynthesis; gluconeogenesis. It functions in the pathway carbohydrate degradation; glycolysis; D-glyceraldehyde 3-phosphate and glycerone phosphate from D-glucose: step 2/4. Catalyzes the reversible isomerization of glucose-6-phosphate to fructose-6-phosphate. This chain is Glucose-6-phosphate isomerase, found in Salmonella arizonae (strain ATCC BAA-731 / CDC346-86 / RSK2980).